The chain runs to 255 residues: Indole-3-glycerol phosphate synthase (255 aa).

It belongs to the TrpC family.

It carries out the reaction 1-(2-carboxyphenylamino)-1-deoxy-D-ribulose 5-phosphate + H(+) = (1S,2R)-1-C-(indol-3-yl)glycerol 3-phosphate + CO2 + H2O. Its pathway is amino-acid biosynthesis; L-tryptophan biosynthesis; L-tryptophan from chorismate: step 4/5. In Streptococcus pneumoniae serotype 19F (strain G54), this protein is Indole-3-glycerol phosphate synthase.